The chain runs to 530 residues: Probable flavin-containing monooxygenase 1 (530 aa).

FAD-binding positions include 17–21 (GAGVS), glutamate 38, 46–47 (VW), and 58–59 (QS). NADP(+) is bound at residue 219–222 (SAID).

This sequence belongs to the FMO family. FAD is required as a cofactor.

In terms of biological role, required for the establishment of systemic acquired resistance (SAR). Not involved in local defense mechanisms. Confers a salicylic acid-dependent (SA) resistance to virulent pathogens such as P.syringae pv tomato and H.parasitica. The chain is Probable flavin-containing monooxygenase 1 (FMO1) from Arabidopsis thaliana (Mouse-ear cress).